Consider the following 501-residue polypeptide: ATP synthase subunit alpha (501 aa).

ATP is bound at residue 169 to 176 (GDRQTGKT).

Belongs to the ATPase alpha/beta chains family. As to quaternary structure, F-type ATPases have 2 components, CF(1) - the catalytic core - and CF(0) - the membrane proton channel. CF(1) has five subunits: alpha(3), beta(3), gamma(1), delta(1), epsilon(1). CF(0) has three main subunits: a(1), b(2) and c(9-12). The alpha and beta chains form an alternating ring which encloses part of the gamma chain. CF(1) is attached to CF(0) by a central stalk formed by the gamma and epsilon chains, while a peripheral stalk is formed by the delta and b chains.

It is found in the cell membrane. It catalyses the reaction ATP + H2O + 4 H(+)(in) = ADP + phosphate + 5 H(+)(out). In terms of biological role, produces ATP from ADP in the presence of a proton gradient across the membrane. The alpha chain is a regulatory subunit. In Streptococcus pneumoniae serotype 4 (strain ATCC BAA-334 / TIGR4), this protein is ATP synthase subunit alpha.